The chain runs to 364 residues: MAGNANSVDEEVTRILGGIYLGGIRPIIDHRPLGAEFNITHILSVIKFQVIPEYLIRKGYTLKNIPIDDDDVTDVLQYFDETNRFIDQCLFPNEVEYSPRLVDFKKKPQRGAVFAHCQAGLSRSVTFIVAYLMYRYGLSLSMAMHAVKRKKPSVEPNENFMEQLHLFEKMGGDFVDFDNPAYKQWKLKQSIKLDPSGSELVSNSGMFKDSESSQDLDKLTEAEKSKVTAVRCKKCRTKLALSTSFIAHDPPSKESSEGHFIKRAANSHRIIDIQESQANCSHFFIEPLKWMQPELQGKQELEGKFSCPGCSSKVGGYNWKGSRCSCGKWVIPAIHLQTSKVDQFPLQSTALPNMVNFESEKVNR.

The Tyrosine-protein phosphatase domain maps to 11 to 173; sequence EVTRILGGIY…LHLFEKMGGD (163 aa). The Phosphocysteine intermediate role is filled by cysteine 117. Serine 196 is modified (phosphoserine).

This sequence belongs to the protein-tyrosine phosphatase family. Non-receptor class dual specificity subfamily.

It carries out the reaction O-phospho-L-tyrosyl-[protein] + H2O = L-tyrosyl-[protein] + phosphate. Functionally, may be directly involved in signal transduction and/or cell cycle regulation. It is necessary for maintaining growth rate or spore germination. Could show both activity toward tyrosine-protein phosphate as well as with serine-protein phosphate. This is Tyrosine-protein phosphatase YVH1 (YVH1) from Saccharomyces cerevisiae (strain ATCC 204508 / S288c) (Baker's yeast).